The primary structure comprises 116 residues: Large ribosomal subunit protein bL20 (116 aa).

Belongs to the bacterial ribosomal protein bL20 family.

Its function is as follows. Binds directly to 23S ribosomal RNA and is necessary for the in vitro assembly process of the 50S ribosomal subunit. It is not involved in the protein synthesizing functions of that subunit. The protein is Large ribosomal subunit protein bL20 of Desulfatibacillum aliphaticivorans.